The primary structure comprises 72 residues: Translation initiation factor IF-1 (72 aa).

The S1-like domain maps to 1–72 (MPKDDSIEVE…TRGRITYRAK (72 aa)).

This sequence belongs to the IF-1 family. As to quaternary structure, component of the 30S ribosomal translation pre-initiation complex which assembles on the 30S ribosome in the order IF-2 and IF-3, IF-1 and N-formylmethionyl-tRNA(fMet); mRNA recruitment can occur at any time during PIC assembly.

The protein resides in the cytoplasm. In terms of biological role, one of the essential components for the initiation of protein synthesis. Stabilizes the binding of IF-2 and IF-3 on the 30S subunit to which N-formylmethionyl-tRNA(fMet) subsequently binds. Helps modulate mRNA selection, yielding the 30S pre-initiation complex (PIC). Upon addition of the 50S ribosomal subunit IF-1, IF-2 and IF-3 are released leaving the mature 70S translation initiation complex. The protein is Translation initiation factor IF-1 of Myxococcus xanthus (strain DK1622).